The following is a 131-amino-acid chain: Aspartate 1-decarboxylase (131 aa).

Serine 25 acts as the Schiff-base intermediate with substrate; via pyruvic acid in catalysis. Pyruvic acid (Ser) is present on serine 25. Threonine 57 lines the substrate pocket. Tyrosine 58 serves as the catalytic Proton donor. Residue 73-75 coordinates substrate; sequence GAA.

This sequence belongs to the PanD family. Heterooctamer of four alpha and four beta subunits. Pyruvate is required as a cofactor. Post-translationally, is synthesized initially as an inactive proenzyme, which is activated by self-cleavage at a specific serine bond to produce a beta-subunit with a hydroxyl group at its C-terminus and an alpha-subunit with a pyruvoyl group at its N-terminus.

It is found in the cytoplasm. It carries out the reaction L-aspartate + H(+) = beta-alanine + CO2. The protein operates within cofactor biosynthesis; (R)-pantothenate biosynthesis; beta-alanine from L-aspartate: step 1/1. In terms of biological role, catalyzes the pyruvoyl-dependent decarboxylation of aspartate to produce beta-alanine. This Anaeromyxobacter sp. (strain Fw109-5) protein is Aspartate 1-decarboxylase.